A 150-amino-acid polypeptide reads, in one-letter code: uncharacterized protein (150 aa).

A run of 5 repeats spans residues 101–105, 106–110, 111–115, 116–120, and 121–125. The interval 101-125 is 5 X 5 AA tandem repeats of [FH]-H-[EK]-[IV]-N; sequence FHEVNHHEVNHHKINHHEVNHHKIN.

Belongs to the asfivirus D129L family.

This is an uncharacterized protein from African swine fever virus (isolate Tick/Malawi/Lil 20-1/1983) (ASFV).